The chain runs to 629 residues: Chaperone protein HtpG (629 aa).

Positions 1–335 (MSEVETSVEK…TADLPLNVSR (335 aa)) are a; substrate-binding. The tract at residues 336–551 (EMIQESPLLA…EQGPDRQLQK (216 aa)) is b. The tract at residues 552–629 (MLQDAGRIEG…SRVFGRALKE (78 aa)) is c.

The protein belongs to the heat shock protein 90 family. Homodimer.

It is found in the cytoplasm. Molecular chaperone. Has ATPase activity. The sequence is that of Chaperone protein HtpG from Rhizobium meliloti (strain 1021) (Ensifer meliloti).